We begin with the raw amino-acid sequence, 391 residues long: 3-ketoacyl-CoA thiolase (391 aa).

The Acyl-thioester intermediate role is filled by cysteine 95. Catalysis depends on proton acceptor residues histidine 347 and cysteine 377.

The protein belongs to the thiolase-like superfamily. Thiolase family. Heterotetramer of two alpha chains (FadB) and two beta chains (FadA).

It localises to the cytoplasm. It catalyses the reaction an acyl-CoA + acetyl-CoA = a 3-oxoacyl-CoA + CoA. The protein operates within lipid metabolism; fatty acid beta-oxidation. Functionally, catalyzes the final step of fatty acid oxidation in which acetyl-CoA is released and the CoA ester of a fatty acid two carbons shorter is formed. The chain is 3-ketoacyl-CoA thiolase from Alcanivorax borkumensis (strain ATCC 700651 / DSM 11573 / NCIMB 13689 / SK2).